Here is a 336-residue protein sequence, read N- to C-terminus: Tyrosine recombinase XerC (336 aa).

Positions 14-106 (VANCRWLGEF…SVKSFYRFLL (93 aa)) constitute a Core-binding (CB) domain. Residues 127–330 (KIPDFLSEEE…TFNRLRDAYT (204 aa)) form the Tyr recombinase domain. Active-site residues include R183, K207, H282, R285, and H308. The active-site O-(3'-phospho-DNA)-tyrosine intermediate is Y317.

It belongs to the 'phage' integrase family. XerC subfamily. In terms of assembly, forms a cyclic heterotetrameric complex composed of two molecules of XerC and two molecules of XerD.

The protein resides in the cytoplasm. Site-specific tyrosine recombinase, which acts by catalyzing the cutting and rejoining of the recombining DNA molecules. The XerC-XerD complex is essential to convert dimers of the bacterial chromosome into monomers to permit their segregation at cell division. It also contributes to the segregational stability of plasmids. In Chlorobaculum tepidum (strain ATCC 49652 / DSM 12025 / NBRC 103806 / TLS) (Chlorobium tepidum), this protein is Tyrosine recombinase XerC.